We begin with the raw amino-acid sequence, 270 residues long: Large ribosomal subunit protein uL2c (270 aa).

Residues 221-245 form a disordered region; the sequence is NPIDHPHGGGEGRAPIGRNQPKTPW.

The protein belongs to the universal ribosomal protein uL2 family. Part of the 50S ribosomal subunit.

The protein resides in the plastid. The protein is Large ribosomal subunit protein uL2c (rpl2) of Cuscuta gronovii (Common dodder).